The primary structure comprises 305 residues: rRNA 2'-O-methyltransferase fibrillarin (305 aa).

Residues 1–70 are disordered; it reads MAYTPGSRGG…SGGRGGAKGG (70 aa). Over residues 7-69 the composition is skewed to gly residues; the sequence is SRGGRGGSRG…SSGGRGGAKG (63 aa). Residues S111 and S114 each carry the phosphoserine modification. S-adenosyl-L-methionine is bound by residues 160-161, 179-180, 204-205, and 224-227; these read TS, EF, DA, and DVAQ.

The protein belongs to the methyltransferase superfamily. Fibrillarin family. As to quaternary structure, component of box C/D small nucleolar ribonucleoprotein (snoRNP) particles. In terms of processing, by homology to other fibrillarins, some or all of the N-terminal domain arginines are modified to asymmetric dimethylarginine (DMA).

Its subcellular location is the nucleus. It localises to the nucleolus. The enzyme catalyses L-glutaminyl-[histone H2A] + S-adenosyl-L-methionine = N(5)-methyl-L-glutaminyl-[histone H2A] + S-adenosyl-L-homocysteine + H(+). Its function is as follows. S-adenosyl-L-methionine-dependent methyltransferase that has the ability to methylate both RNAs and proteins. Involved in pre-rRNA processing by catalyzing the site-specific 2'-hydroxyl methylation of ribose moieties in pre-ribosomal RNA. Site specificity is provided by a guide RNA that base pairs with the substrate. Methylation occurs at a characteristic distance from the sequence involved in base pairing with the guide RNA. Also acts as a protein methyltransferase by mediating methylation of 'Gln-105' of histone H2A (H2AQ105me), a modification that impairs binding of the FACT complex and is specifically present at 35S ribosomal DNA locus. This Schizosaccharomyces pombe (strain 972 / ATCC 24843) (Fission yeast) protein is rRNA 2'-O-methyltransferase fibrillarin (fib1).